The following is a 182-amino-acid chain: Crossover junction endodeoxyribonuclease RuvC (182 aa).

Residues Asp7, Glu69, and Asp141 contribute to the active site. Mg(2+)-binding residues include Asp7, Glu69, and Asp141.

This sequence belongs to the RuvC family. Homodimer which binds Holliday junction (HJ) DNA. The HJ becomes 2-fold symmetrical on binding to RuvC with unstacked arms; it has a different conformation from HJ DNA in complex with RuvA. In the full resolvosome a probable DNA-RuvA(4)-RuvB(12)-RuvC(2) complex forms which resolves the HJ. Mg(2+) serves as cofactor.

The protein resides in the cytoplasm. It catalyses the reaction Endonucleolytic cleavage at a junction such as a reciprocal single-stranded crossover between two homologous DNA duplexes (Holliday junction).. In terms of biological role, the RuvA-RuvB-RuvC complex processes Holliday junction (HJ) DNA during genetic recombination and DNA repair. Endonuclease that resolves HJ intermediates. Cleaves cruciform DNA by making single-stranded nicks across the HJ at symmetrical positions within the homologous arms, yielding a 5'-phosphate and a 3'-hydroxyl group; requires a central core of homology in the junction. The consensus cleavage sequence is 5'-(A/T)TT(C/G)-3'. Cleavage occurs on the 3'-side of the TT dinucleotide at the point of strand exchange. HJ branch migration catalyzed by RuvA-RuvB allows RuvC to scan DNA until it finds its consensus sequence, where it cleaves and resolves the cruciform DNA. The sequence is that of Crossover junction endodeoxyribonuclease RuvC from Delftia acidovorans (strain DSM 14801 / SPH-1).